We begin with the raw amino-acid sequence, 437 residues long: GTP-binding protein ERG (437 aa).

A compositionally biased stretch (polar residues) spans 39–50 (QPNLDEPTSINE). The interval 39–65 (QPNLDEPTSINEDGSSSDSVFDSSQYP) is disordered. Residues 51–62 (DGSSSDSVFDSS) show a composition bias toward low complexity. Phosphoserine is present on residues S111 and S112. Residues 152–333 (KSLNVGIIGP…LMDQAVKKPW (182 aa)) enclose the Era-type G domain. Residues 160–167 (GPPNAGKS) are G1. 160 to 167 (GPPNAGKS) is a binding site for GTP. The segment at 186–190 (NTTTH) is G2. A G3 region spans residues 207 to 210 (DTPG). GTP contacts are provided by residues 207-211 (DTPGL) and 279-282 (NKVD). Residues 279 to 282 (NKVD) are G4. Residues 309 to 311 (ISG) form a G5 region. The KH type-2 domain maps to 361–437 (VHQEIPYGLE…VHLILQVKLK (77 aa)).

Belongs to the TRAFAC class TrmE-Era-EngA-EngB-Septin-like GTPase superfamily. Era GTPase family.

Has a crucial role in plant growth and development, possibly by influencing mitochondrial division. The polypeptide is GTP-binding protein ERG (ERG) (Arabidopsis thaliana (Mouse-ear cress)).